The primary structure comprises 333 residues: UDP-N-acetylenolpyruvoylglucosamine reductase (333 aa).

The 165-residue stretch at 12–176 (LPAQCRALIE…TSVVFRLPKD (165 aa)) folds into the FAD-binding PCMH-type domain. Arg153 is a catalytic residue. Ser221 functions as the Proton donor in the catalytic mechanism. The active site involves Glu317.

This sequence belongs to the MurB family. FAD is required as a cofactor.

Its subcellular location is the cytoplasm. The catalysed reaction is UDP-N-acetyl-alpha-D-muramate + NADP(+) = UDP-N-acetyl-3-O-(1-carboxyvinyl)-alpha-D-glucosamine + NADPH + H(+). It participates in cell wall biogenesis; peptidoglycan biosynthesis. Functionally, cell wall formation. This is UDP-N-acetylenolpyruvoylglucosamine reductase from Idiomarina loihiensis (strain ATCC BAA-735 / DSM 15497 / L2-TR).